The primary structure comprises 136 residues: Ribonuclease VapC1 (136 aa).

In terms of domain architecture, PINc spans 18–129; the sequence is ILVDTSVLID…KKHFERLKEF (112 aa). Mg(2+)-binding residues include D21 and D101.

It belongs to the PINc/VapC protein family. Requires Mg(2+) as cofactor.

Functionally, toxic component of a type II toxin-antitoxin (TA) system. An RNase. Its cognate antitoxin is VapB1. This Methanocaldococcus jannaschii (strain ATCC 43067 / DSM 2661 / JAL-1 / JCM 10045 / NBRC 100440) (Methanococcus jannaschii) protein is Ribonuclease VapC1.